The chain runs to 72 residues: Brevinin-2SN3 (72 aa).

The N-terminal stretch at 1–22 (MFTLKKPLLLLVFLGMISLSLC) is a signal peptide. Residues 23–40 (QDERGADEDDGGEMTEEE) constitute a propeptide, removed in mature form. C66 and C72 form a disulfide bridge.

It belongs to the frog skin active peptide (FSAP) family. Brevinin subfamily. Expressed by the skin glands.

The protein resides in the secreted. Antimicrobial peptide. Active against a variety of Gram-negative and Gram-positive bacterial strains. Active against fungus C.glabrata 090902 but not against C.albicans ATCC 10231. Shows hemolytic activity against human erythrocytes. The polypeptide is Brevinin-2SN3 (Sylvirana spinulosa (Fine-spined frog)).